We begin with the raw amino-acid sequence, 415 residues long: [Pyruvate dehydrogenase (acetyl-transferring)] kinase isozyme 3, mitochondrial (415 aa).

Residues 131–362 enclose the Histidine kinase domain; that stretch reads IEYKEKFGFD…DAVIYLKALS (232 aa). Position 247-254 (247-254) interacts with ATP; that stretch reads ELFKNSMR. An N6-succinyllysine modification is found at lysine 278. ATP is bound by residues aspartate 287, 306–307, and 323–328; these read ST and GFGYGL. The tract at residues 383–415 is disordered; sequence TPEADDWSNPSSEPRDASKYKAKQDKIKSNRTF. Positions 395 to 415 are enriched in basic and acidic residues; sequence EPRDASKYKAKQDKIKSNRTF.

The protein belongs to the PDK/BCKDK protein kinase family. In terms of assembly, homodimer. Interacts with the pyruvate dehydrogenase complex subunit DLAT, and is part of the multimeric pyruvate dehydrogenase complex that contains multiple copies of pyruvate dehydrogenase (E1), dihydrolipoamide acetyltransferase (DLAT, E2) and lipoamide dehydrogenase (DLD, E3).

The protein resides in the mitochondrion matrix. The catalysed reaction is L-seryl-[pyruvate dehydrogenase E1 alpha subunit] + ATP = O-phospho-L-seryl-[pyruvate dehydrogenase E1 alpha subunit] + ADP + H(+). Inhibits pyruvate dehydrogenase activity by phosphorylation of the E1 subunit PDHA1, and thereby regulates glucose metabolism and aerobic respiration. Can also phosphorylate PDHA2. Decreases glucose utilization and increases fat metabolism in response to prolonged fasting, and as adaptation to a high-fat diet. Plays a role in glucose homeostasis and in maintaining normal blood glucose levels in function of nutrient levels and under starvation. Plays a role in the generation of reactive oxygen species. The protein is [Pyruvate dehydrogenase (acetyl-transferring)] kinase isozyme 3, mitochondrial (Pdk3) of Mus musculus (Mouse).